Reading from the N-terminus, the 632-residue chain is SH2B adapter protein 2 (632 aa).

Residue tyrosine 52 is modified to Phosphotyrosine. Serine 141 carries the phosphoserine modification. A PH domain is found at 193 to 306 (DIQREGALRF…WVADIQGCVD (114 aa)). Serine 310 carries the post-translational modification Phosphoserine. The interval 381 to 409 (TLESPGGSGSDSNNTGEQGAETDPEAEPE) is disordered. A compositionally biased stretch (acidic residues) spans 400-409 (AETDPEAEPE). The 99-residue stretch at 417–515 (WFHGTLSRVK…SADITLRSYV (99 aa)) folds into the SH2 domain. Disordered regions lie at residues 516 to 537 (RAQD…SPAC) and 558 to 632 (ASPS…YSFY). Pro residues predominate over residues 519–532 (DPPPEPGPTPPAAP). 2 stretches are compositionally biased toward low complexity: residues 558 to 579 (ASPS…AASG) and 604 to 626 (EAVA…RAVE). Tyrosine 629 is modified (phosphotyrosine).

The protein belongs to the SH2B adapter family. In terms of assembly, homodimer. Interacts with KIT/c-KIT, SHC1, EPOR, PDGFR, VAV1 and VAV3. Interacts (via N-terminal region) with SHC1. Interacts (via the phosphorylated C-terminus) with GRB2. Interacts (via its SH2 domain) with EPOR, INSR and KIT. Interacts with GRB2 after B-cell antigen receptor stimulation. Interacts (via PH domain) with VAV3. Interacts with NTRK1, NTRK2 and NTRK3 (phosphorylated); after stimulation of the receptor by its extracellular ligand and subsequent autophosphorylation of the receptor. Binds INSR, GRB2, ASB6 and CAP. Insulin stimulation leads to dissociation of CAP. Binds CBS only when SH2B2/APS has become phosphorylated. INSR binding does not depend on the phosphorylation of SH2B2/APS. In terms of processing, tyrosine phosphorylated by JAK2, KIT and other kinases activated by B-cell receptor in response to stimulation with cytokines, IL3, IL5, PDGF, IGF1, IGF2, CSF2/GM-CSF and cross-linking of the B-cell receptor complex. As to expression, expressed in spleen, prostate, testis, uterus, small intestine and skeletal muscle. Among hematopoietic cell lines, expressed exclusively in B-cells. Not expressed in most tumor cell lines.

The protein resides in the cytoplasm. It localises to the cell membrane. Functionally, adapter protein for several members of the tyrosine kinase receptor family. Involved in multiple signaling pathways. May be involved in coupling from immunoreceptor to Ras signaling. Acts as a negative regulator of cytokine signaling in collaboration with CBL. Binds to EPOR and suppresses EPO-induced STAT5 activation, possibly through a masking effect on STAT5 docking sites in EPOR. Suppresses PDGF-induced mitogenesis. May induce cytoskeletal reorganization via interaction with VAV3. The chain is SH2B adapter protein 2 (SH2B2) from Homo sapiens (Human).